The sequence spans 522 residues: Maturase K (522 aa).

Belongs to the intron maturase 2 family. MatK subfamily.

The protein resides in the plastid. Its subcellular location is the chloroplast. Functionally, usually encoded in the trnK tRNA gene intron. Probably assists in splicing its own and other chloroplast group II introns. The sequence is that of Maturase K from Dianella ensifolia (Flax lily).